Here is a 137-residue protein sequence, read N- to C-terminus: Small ribosomal subunit protein uS12 (137 aa).

Residues 1 to 24 (MPTINQLVRKGRRSQSSKSKAPAL) form a disordered region. Asp102 is subject to 3-methylthioaspartic acid.

Belongs to the universal ribosomal protein uS12 family. In terms of assembly, part of the 30S ribosomal subunit. Contacts proteins S8 and S17. May interact with IF1 in the 30S initiation complex.

In terms of biological role, with S4 and S5 plays an important role in translational accuracy. Interacts with and stabilizes bases of the 16S rRNA that are involved in tRNA selection in the A site and with the mRNA backbone. Located at the interface of the 30S and 50S subunits, it traverses the body of the 30S subunit contacting proteins on the other side and probably holding the rRNA structure together. The combined cluster of proteins S8, S12 and S17 appears to hold together the shoulder and platform of the 30S subunit. This is Small ribosomal subunit protein uS12 from Pediococcus pentosaceus (strain ATCC 25745 / CCUG 21536 / LMG 10740 / 183-1w).